The following is a 486-amino-acid chain: Glutamyl-tRNA(Gln) amidotransferase subunit A (486 aa).

Residues Lys80 and Ser155 each act as charge relay system in the active site. Ser179 acts as the Acyl-ester intermediate in catalysis.

This sequence belongs to the amidase family. GatA subfamily. Heterotrimer of A, B and C subunits.

The enzyme catalyses L-glutamyl-tRNA(Gln) + L-glutamine + ATP + H2O = L-glutaminyl-tRNA(Gln) + L-glutamate + ADP + phosphate + H(+). In terms of biological role, allows the formation of correctly charged Gln-tRNA(Gln) through the transamidation of misacylated Glu-tRNA(Gln) in organisms which lack glutaminyl-tRNA synthetase. The reaction takes place in the presence of glutamine and ATP through an activated gamma-phospho-Glu-tRNA(Gln). This Geobacillus sp. (strain WCH70) protein is Glutamyl-tRNA(Gln) amidotransferase subunit A.